The primary structure comprises 383 residues: Photosynthetic reaction center cytochrome c subunit (383 aa).

Residues 1–22 (MNLGKQLTLPAVAVVASVVLLG) form the signal peptide. Cys-23 carries the N-palmitoyl cysteine lipid modification. Cys-23 carries S-diacylglycerol cysteine lipidation. Residues Met-94, Cys-107, Cys-110, His-111, Met-130, His-144, Cys-152, Cys-155, His-156, Met-236, Cys-247, Cys-250, His-251, Cys-307, Cys-310, and His-311 each contribute to the heme site. The tract at residues 335–383 (PAEAAPATEEAPAAEAEAVEAAPVEEAAPAPVEQAAAPVEDAAPAPQQL) is disordered.

In terms of assembly, component of the photosynthetic reaction center composed of protein subunits L (PufL), M (PufM), H (PuhA) and cytochrome C (PufC). The reaction center interacts with light-harvesting antenna complex LH1. In terms of processing, binds 4 heme groups per subunit.

The protein localises to the cellular chromatophore membrane. Functionally, the reaction center of purple bacteria contains a tightly bound cytochrome molecule which re-reduces the photo oxidized primary electron donor. In Allochromatium vinosum (strain ATCC 17899 / DSM 180 / NBRC 103801 / NCIMB 10441 / D) (Chromatium vinosum), this protein is Photosynthetic reaction center cytochrome c subunit (pufC).